We begin with the raw amino-acid sequence, 667 residues long: Bifunctional polymyxin resistance protein ArnA (667 aa).

Residues 1–304 (MKAIVFAYHD…EMGIVTDVRL (304 aa)) form a formyltransferase ArnAFT region. Residue His104 is the Proton donor; for formyltransferase activity of the active site. (6R)-10-formyltetrahydrofolate-binding positions include Arg114 and 136-140 (VKKAD). The interval 314–667 (RRTRVLILGV…TAAPKDELNA (354 aa)) is dehydrogenase ArnADH. NAD(+)-binding positions include Asp347 and 368–369 (DI). UDP-alpha-D-glucuronate contacts are provided by residues Ala393, Tyr398, and 432–433 (TS). Glu434 serves as the catalytic Proton acceptor; for decarboxylase activity. UDP-alpha-D-glucuronate-binding positions include Arg460, Asn492, 526-535 (KLVDGGAQKR), and Tyr613. The Proton donor; for decarboxylase activity role is filled by Arg619.

The protein in the N-terminal section; belongs to the Fmt family. UDP-L-Ara4N formyltransferase subfamily. It in the C-terminal section; belongs to the NAD(P)-dependent epimerase/dehydratase family. UDP-glucuronic acid decarboxylase subfamily. In terms of assembly, homohexamer, formed by a dimer of trimers.

It catalyses the reaction UDP-alpha-D-glucuronate + NAD(+) = UDP-beta-L-threo-pentopyranos-4-ulose + CO2 + NADH. The catalysed reaction is UDP-4-amino-4-deoxy-beta-L-arabinose + (6R)-10-formyltetrahydrofolate = UDP-4-deoxy-4-formamido-beta-L-arabinose + (6S)-5,6,7,8-tetrahydrofolate + H(+). It functions in the pathway nucleotide-sugar biosynthesis; UDP-4-deoxy-4-formamido-beta-L-arabinose biosynthesis; UDP-4-deoxy-4-formamido-beta-L-arabinose from UDP-alpha-D-glucuronate: step 1/3. The protein operates within nucleotide-sugar biosynthesis; UDP-4-deoxy-4-formamido-beta-L-arabinose biosynthesis; UDP-4-deoxy-4-formamido-beta-L-arabinose from UDP-alpha-D-glucuronate: step 3/3. Its pathway is bacterial outer membrane biogenesis; lipopolysaccharide biosynthesis. Its function is as follows. Bifunctional enzyme that catalyzes the oxidative decarboxylation of UDP-glucuronic acid (UDP-GlcUA) to UDP-4-keto-arabinose (UDP-Ara4O) and the addition of a formyl group to UDP-4-amino-4-deoxy-L-arabinose (UDP-L-Ara4N) to form UDP-L-4-formamido-arabinose (UDP-L-Ara4FN). The modified arabinose is attached to lipid A and is required for resistance to polymyxin and cationic antimicrobial peptides. This Yersinia pestis bv. Antiqua (strain Antiqua) protein is Bifunctional polymyxin resistance protein ArnA.